The following is a 274-amino-acid chain: Undecaprenyl-diphosphatase 1 (274 aa).

7 helical membrane-spanning segments follow: residues 8-28 (WLLI…PIPV), 45-65 (IEGL…VIAI), 92-112 (FRIS…ALLF), 120-140 (LKQL…LWLI), 195-215 (FSFF…ISDI), 230-250 (IAFI…MNIM), and 253-273 (GKLI…LSLL).

Belongs to the UppP family.

The protein resides in the cell membrane. The enzyme catalyses di-trans,octa-cis-undecaprenyl diphosphate + H2O = di-trans,octa-cis-undecaprenyl phosphate + phosphate + H(+). In terms of biological role, catalyzes the dephosphorylation of undecaprenyl diphosphate (UPP). Confers resistance to bacitracin. The polypeptide is Undecaprenyl-diphosphatase 1 (Halalkalibacterium halodurans (strain ATCC BAA-125 / DSM 18197 / FERM 7344 / JCM 9153 / C-125) (Bacillus halodurans)).